The sequence spans 97 residues: Acylphosphatase (97 aa).

The Acylphosphatase-like domain maps to 7–97; it reads RLTAWVHGHV…QERFEGFVER (91 aa). Residues arginine 22 and asparagine 40 contribute to the active site.

It belongs to the acylphosphatase family.

It carries out the reaction an acyl phosphate + H2O = a carboxylate + phosphate + H(+). The protein is Acylphosphatase (acyP) of Mycobacterium avium (strain 104).